The chain runs to 245 residues: Probable inactive carboxylesterase Os04g0669700 (245 aa).

Catalysis depends on charge relay system residues serine 115 and histidine 201.

This sequence belongs to the AB hydrolase superfamily. AB hydrolase 2 family.

The protein is Probable inactive carboxylesterase Os04g0669700 of Oryza sativa subsp. japonica (Rice).